The chain runs to 101 residues: Small ribosomal subunit protein uS14 (101 aa).

It belongs to the universal ribosomal protein uS14 family. Part of the 30S ribosomal subunit. Contacts proteins S3 and S10.

In terms of biological role, binds 16S rRNA, required for the assembly of 30S particles and may also be responsible for determining the conformation of the 16S rRNA at the A site. The sequence is that of Small ribosomal subunit protein uS14 from Pelagibacter ubique (strain HTCC1062).